A 488-amino-acid polypeptide reads, in one-letter code: Proline--tRNA ligase (488 aa).

This sequence belongs to the class-II aminoacyl-tRNA synthetase family. ProS type 3 subfamily. In terms of assembly, homodimer.

Its subcellular location is the cytoplasm. The enzyme catalyses tRNA(Pro) + L-proline + ATP = L-prolyl-tRNA(Pro) + AMP + diphosphate. Functionally, catalyzes the attachment of proline to tRNA(Pro) in a two-step reaction: proline is first activated by ATP to form Pro-AMP and then transferred to the acceptor end of tRNA(Pro). Can inadvertently accommodate and process cysteine. This Borreliella burgdorferi (strain ATCC 35210 / DSM 4680 / CIP 102532 / B31) (Borrelia burgdorferi) protein is Proline--tRNA ligase (proS).